A 414-amino-acid chain; its full sequence is Methyl-CpG-binding domain protein 2 (414 aa).

The interval 1–152 (MRAHPGGGRC…GPRATESGKR (152 aa)) is required for interaction with DHX9 and PRMT5. Positions 1–163 (MRAHPGGGRC…DCPALPPGWK (163 aa)) are disordered. Over residues 77 to 95 (GRGRGRGRGRGRGRGRGRG) the composition is skewed to basic residues. A compositionally biased stretch (gly residues) spans 98–123 (QSGGSGLGGDGGGGAGGCGGGSGGGV). Residues 148–216 (ESGKRMDCPA…SSFDFRTGKM (69 aa)) form the MBD domain. Ser-184 is modified (phosphoserine). Residues 217–244 (MPSKLQKNKQRLRNDPLNQNKGKPDLNT) form a disordered region. Residues 232-244 (PLNQNKGKPDLNT) are compositionally biased toward polar residues. Ser-410 carries the phosphoserine modification.

In terms of assembly, heterodimer with MBD3 (via N-terminus). Component of the MeCP1 complex that contains HDAC1 and HDAC2. Component of the nucleosome remodeling and deacetylase (NuRD) repressor complex, composed of core proteins MTA1, MTA2, MTA3, RBBP4, RBBP7, HDAC1, HDAC2, MBD2, MBD3, and peripherally associated proteins CDK2AP1, CDK2AP2, GATAD2A, GATAD2B, CHD3, CHD4 and CHD5. The exact stoichiometry of the NuRD complex is unknown, and some subunits such as MBD2 and MBD3, GATAD2A and GATAD2B, and CHD3, CHD4 and CHD5 define mutually exclusive NuRD complexes. Interacts with CDK2AP1. Interacts with DHX9. Interacts with DNMT1. Interacts with GATAD2A/p66-alpha. Interacts with GATAD2B/p66-beta. Interacts with GPN1. Interacts with MIZF. Interacts with PRMT5. Interacts with SIN3A. Interacts with SPHK2. Highly expressed in brain, heart, kidney, lung, skeletal muscle, spleen and testis. Detected at lower levels in embryonic stem cells.

The protein resides in the nucleus. It is found in the chromosome. Its function is as follows. Binds CpG islands in promoters where the DNA is methylated at position 5 of cytosine within CpG dinucleotides. Binds hemimethylated DNA as well. Recruits histone deacetylases and DNA methyltransferases to chromatin. Acts as a component of the histone deacetylase NuRD complex which participates in the remodeling of chromatin. Acts as transcriptional repressor and plays a role in gene silencing. Functions as a scaffold protein, targeting GATAD2A and GATAD2B to chromatin to promote repression. May enhance the activation of some unmethylated cAMP-responsive promoters. Selectively represses transcription activity of methylated rRNA promoters. The protein is Methyl-CpG-binding domain protein 2 of Mus musculus (Mouse).